Consider the following 265-residue polypeptide: Putative carbamate hydrolase RutD (265 aa).

The AB hydrolase-1 domain occupies 14 to 123 (PTLVLSSGLG…WSSPNPHSAR (110 aa)).

This sequence belongs to the AB hydrolase superfamily. Hydrolase RutD family.

It carries out the reaction carbamate + 2 H(+) = NH4(+) + CO2. Involved in pyrimidine catabolism. May facilitate the hydrolysis of carbamate, a reaction that can also occur spontaneously. This Stutzerimonas stutzeri (strain A1501) (Pseudomonas stutzeri) protein is Putative carbamate hydrolase RutD.